The sequence spans 383 residues: L-Ala-D/L-Glu epimerase (383 aa).

Substrate-binding positions include Arg68, Tyr94, and 198-200 (KVK). The Mg(2+) site is built by Asp224, Glu251, and Asp276. Residues Lys298, 326-328 (CMT), and 348-350 (DLD) each bind substrate.

This sequence belongs to the mandelate racemase/muconate lactonizing enzyme family. Mg(2+) serves as cofactor.

It carries out the reaction L-alanyl-L-glutamate = L-alanyl-D-glutamate. Catalyzes the epimerization of L-Ala-D-Glu to L-Ala-L-Glu and may play a role in the metabolism of the murein peptide, of which L-Ala-D-Glu is a component. Is also able to catalyze the epimerization of L-Ala-D-Asp, L-Ala-L-Glu, L-Ala-L-Ser, L-Ala-L-Pro, L-Ala-L-L-Val, L-Ala-L-Thr, L-Ala-L-Leu, L-Ala-L-Ile and L-Gly-L-Glu (in vitro). This is L-Ala-D/L-Glu epimerase from Bacteroides thetaiotaomicron (strain ATCC 29148 / DSM 2079 / JCM 5827 / CCUG 10774 / NCTC 10582 / VPI-5482 / E50).